The sequence spans 81 residues: Cortexin-2 (81 aa).

Residues 29-49 (TGFAFVGILCIFLGLLIIRCF) traverse the membrane as a helical segment.

Belongs to the cortexin family.

The protein localises to the membrane. The polypeptide is Cortexin-2 (CTXN2) (Homo sapiens (Human)).